A 286-amino-acid polypeptide reads, in one-letter code: Elongation factor Ts (286 aa).

Positions T82–V85 are involved in Mg(2+) ion dislocation from EF-Tu.

This sequence belongs to the EF-Ts family.

Its subcellular location is the cytoplasm. In terms of biological role, associates with the EF-Tu.GDP complex and induces the exchange of GDP to GTP. It remains bound to the aminoacyl-tRNA.EF-Tu.GTP complex up to the GTP hydrolysis stage on the ribosome. The sequence is that of Elongation factor Ts from Hahella chejuensis (strain KCTC 2396).